A 276-amino-acid chain; its full sequence is Dermonecrotic toxin Ls4SicTox-alphaIII1i (276 aa).

The active site involves His3. Mg(2+)-binding residues include Glu23 and Asp25. The active-site Nucleophile is the His38. Cys42 and Cys48 are disulfide-bonded. Asp82 contacts Mg(2+).

The protein belongs to the arthropod phospholipase D family. Class I subfamily. Requires Mg(2+) as cofactor. In terms of tissue distribution, expressed by the venom gland.

The protein resides in the secreted. The catalysed reaction is an N-(acyl)-sphingosylphosphocholine = an N-(acyl)-sphingosyl-1,3-cyclic phosphate + choline. The enzyme catalyses an N-(acyl)-sphingosylphosphoethanolamine = an N-(acyl)-sphingosyl-1,3-cyclic phosphate + ethanolamine. It catalyses the reaction a 1-acyl-sn-glycero-3-phosphocholine = a 1-acyl-sn-glycero-2,3-cyclic phosphate + choline. It carries out the reaction a 1-acyl-sn-glycero-3-phosphoethanolamine = a 1-acyl-sn-glycero-2,3-cyclic phosphate + ethanolamine. In terms of biological role, dermonecrotic toxins cleave the phosphodiester linkage between the phosphate and headgroup of certain phospholipids (sphingolipid and lysolipid substrates), forming an alcohol (often choline) and a cyclic phosphate. This toxin acts on sphingomyelin (SM). It may also act on ceramide phosphoethanolamine (CPE), lysophosphatidylcholine (LPC) and lysophosphatidylethanolamine (LPE), but not on lysophosphatidylserine (LPS), and lysophosphatidylglycerol (LPG). It acts by transphosphatidylation, releasing exclusively cyclic phosphate products as second products. Induces dermonecrosis, hemolysis, increased vascular permeability, edema, inflammatory response, and platelet aggregation. This chain is Dermonecrotic toxin Ls4SicTox-alphaIII1i, found in Loxosceles sp. (strain 4 GJB-2008) (Recluse spider).